Reading from the N-terminus, the 701-residue chain is Polyribonucleotide nucleotidyltransferase (701 aa).

Mg(2+)-binding residues include Asp-485 and Asp-491. Residues 552–611 (PKIFKTTVDPEKIRDIIGPGGKMINKIIAKTNVKIDIEPDGRIFVAAPDDISGNRAISMI) enclose the KH domain. Positions 621–689 (GQFFLGKVTR…RLGRIALSRK (69 aa)) constitute an S1 motif domain.

The protein belongs to the polyribonucleotide nucleotidyltransferase family. It depends on Mg(2+) as a cofactor.

Its subcellular location is the cytoplasm. It catalyses the reaction RNA(n+1) + phosphate = RNA(n) + a ribonucleoside 5'-diphosphate. Its function is as follows. Involved in mRNA degradation. Catalyzes the phosphorolysis of single-stranded polyribonucleotides processively in the 3'- to 5'-direction. In Caldicellulosiruptor saccharolyticus (strain ATCC 43494 / DSM 8903 / Tp8T 6331), this protein is Polyribonucleotide nucleotidyltransferase.